We begin with the raw amino-acid sequence, 274 residues long: MTPEQSPLGKPSSYTEQYDASLLFPIARKNARDQIGIGATLPFFGTDIWNAYELSWLNARGKPQIAIATFYVPADSPNIVESKSFKLYLGSFAQSSFDSIDVVRDTIKRDVSAACGSSVSLHLYPPAEFSKLGLEEFEGTSLDRLDLDAEVYQPDASILKAALDEAPVEETLFSNLLKSNCPVTGQPDWGSVQIHYVGPQIDHAALLRYIISYRNHTGFHEQCVEKIFLDVMKVCQPVKLAVYARYTRRGGLDINPFRTNFNLPMPDNLRTARQ.

A substrate-binding site is contributed by 80 to 82; that stretch reads VES. 82 to 83 lines the NADPH pocket; that stretch reads SK. Residue C181 is the Thioimide intermediate of the active site. The Proton donor role is filled by D188. A substrate-binding site is contributed by 220-221; the sequence is HE. 249-250 is an NADPH binding site; the sequence is RG.

It belongs to the GTP cyclohydrolase I family. QueF type 2 subfamily. In terms of assembly, homodimer.

It localises to the cytoplasm. It catalyses the reaction 7-aminomethyl-7-carbaguanine + 2 NADP(+) = 7-cyano-7-deazaguanine + 2 NADPH + 3 H(+). It functions in the pathway tRNA modification; tRNA-queuosine biosynthesis. Catalyzes the NADPH-dependent reduction of 7-cyano-7-deazaguanine (preQ0) to 7-aminomethyl-7-deazaguanine (preQ1). The sequence is that of NADPH-dependent 7-cyano-7-deazaguanine reductase from Paraburkholderia phymatum (strain DSM 17167 / CIP 108236 / LMG 21445 / STM815) (Burkholderia phymatum).